The sequence spans 589 residues: Probable methyltransferase PMT23 (589 aa).

Over 1-4 the chain is Cytoplasmic; that stretch reads MAIS. The chain crosses the membrane as a helical; Signal-anchor for type II membrane protein span at residues 5–25; sequence VQHVVVLLLSTLLIAITFFLF. Over 26 to 589 the chain is Lumenal; that stretch reads TSDNARFPFP…FWRPAKPELR (564 aa). Residues N70, N375, and N442 are each glycosylated (N-linked (GlcNAc...) asparagine).

It belongs to the methyltransferase superfamily.

It is found in the golgi apparatus membrane. The sequence is that of Probable methyltransferase PMT23 from Arabidopsis thaliana (Mouse-ear cress).